A 1680-amino-acid polypeptide reads, in one-letter code: GRIP and coiled-coil domain-containing protein 2 (1680 aa).

M1 carries the post-translational modification N-acetylmethionine. A compositionally biased stretch (low complexity) spans 1-14 (MEDSAPDAVAAAPS). Disordered stretches follow at residues 1-23 (MEDS…KLET) and 1468-1522 (KSEP…SSAG). Residues 31–1614 (KFAKKQMMLL…REKSVANLEY (1584 aa)) are a coiled coil. The span at 1469–1484 (SEPSTRSPASSHQPSK) shows a compositional bias: polar residues. A phosphoserine mark is found at S1475 and S1479. Positions 1570–1609 (HLNGLLRETEATNAILMEQIKLLKSEIRRLERNQEREKSV) are mediates interaction with RAB6A. The interval 1570-1680 (HLNGLLRETE…SYLHSWSGLR (111 aa)) is mediates interaction with RAB9A. The region spanning 1605-1655 (REKSVANLEYLKNVLLRFIFLKPGSERERLLPVIDTMLQLSPEEKGKLATV) is the GRIP domain.

As to quaternary structure, homodimer. Interacts (via GRIP domain) with RAB6A (preferentially in its GTP-bound form). May interact (RAB6A-dependent) with ARL1; might be involved in GCC2 Golgi localization. Interacts (probably via GRIP domain) with RAB9A (preferentially in its GTP-bound form). Interacts with CLASP1 and CLASP2; recruits both proteins to membranes of the TGN. Interacts with STX16.

The protein localises to the cytoplasm. It localises to the golgi apparatus. Its subcellular location is the trans-Golgi network membrane. In terms of biological role, golgin which probably tethers transport vesicles to the trans-Golgi network (TGN) and regulates vesicular transport between the endosomes and the Golgi. As a RAB9A effector it is involved in recycling of the mannose 6-phosphate receptor from the late endosomes to the TGN. May also play a role in transport between the recycling endosomes and the Golgi. Required for maintenance of the Golgi structure, it is involved in the biogenesis of noncentrosomal, Golgi-associated microtubules through recruitment of CLASP1 and CLASP2. The chain is GRIP and coiled-coil domain-containing protein 2 (Gcc2) from Mus musculus (Mouse).